The sequence spans 353 residues: Photosystem II protein D1 (353 aa).

N-acetylthreonine is present on Thr2. Residue Thr2 is modified to Phosphothreonine. 3 consecutive transmembrane segments (helical) span residues 29-46, 118-133, and 142-156; these read YIGW…TATS, HFLL…EWEL, and WIAV…AATA. Position 118 (His118) interacts with chlorophyll a. Pheophytin a is bound at residue Tyr126. 2 residues coordinate [CaMn4O5] cluster: Asp170 and Glu189. The chain crosses the membrane as a helical span at residues 197-218; sequence FHMLGVAGVFGGSLFSAMHGSL. Residue His198 coordinates chlorophyll a. Residues His215 and 264–265 each bind a quinone; that span reads SF. A Fe cation-binding site is contributed by His215. Residue His272 participates in Fe cation binding. A helical membrane pass occupies residues 274–288; sequence FLAAWPVVGIWFTAL. [CaMn4O5] cluster contacts are provided by His332, Glu333, Asp342, and Ala344. A propeptide spanning residues 345–353 is cleaved from the precursor; the sequence is AIEAPSTNG.

This sequence belongs to the reaction center PufL/M/PsbA/D family. In terms of assembly, PSII is composed of 1 copy each of membrane proteins PsbA, PsbB, PsbC, PsbD, PsbE, PsbF, PsbH, PsbI, PsbJ, PsbK, PsbL, PsbM, PsbT, PsbX, PsbY, PsbZ, Psb30/Ycf12, at least 3 peripheral proteins of the oxygen-evolving complex and a large number of cofactors. It forms dimeric complexes. The cofactor is The D1/D2 heterodimer binds P680, chlorophylls that are the primary electron donor of PSII, and subsequent electron acceptors. It shares a non-heme iron and each subunit binds pheophytin, quinone, additional chlorophylls, carotenoids and lipids. D1 provides most of the ligands for the Mn4-Ca-O5 cluster of the oxygen-evolving complex (OEC). There is also a Cl(-1) ion associated with D1 and D2, which is required for oxygen evolution. The PSII complex binds additional chlorophylls, carotenoids and specific lipids.. Post-translationally, tyr-161 forms a radical intermediate that is referred to as redox-active TyrZ, YZ or Y-Z. C-terminally processed by CTPA; processing is essential to allow assembly of the oxygen-evolving complex and thus photosynthetic growth.

Its subcellular location is the plastid. It is found in the chloroplast thylakoid membrane. The enzyme catalyses 2 a plastoquinone + 4 hnu + 2 H2O = 2 a plastoquinol + O2. Its function is as follows. Photosystem II (PSII) is a light-driven water:plastoquinone oxidoreductase that uses light energy to abstract electrons from H(2)O, generating O(2) and a proton gradient subsequently used for ATP formation. It consists of a core antenna complex that captures photons, and an electron transfer chain that converts photonic excitation into a charge separation. The D1/D2 (PsbA/PsbD) reaction center heterodimer binds P680, the primary electron donor of PSII as well as several subsequent electron acceptors. This Gossypium barbadense (Sea Island cotton) protein is Photosystem II protein D1.